An 837-amino-acid chain; its full sequence is V-type proton ATPase 116 kDa subunit a 1 (837 aa).

Topologically, residues 1-388 (MGELFRSEEM…DAYGIGTYRE (388 aa)) are cytoplasmic. Phosphothreonine occurs at positions 250 and 360. Tyr-364 carries the post-translational modification Phosphotyrosine. A helical transmembrane segment spans residues 389–407 (INPAPYTIITFPFLFAVMF). The Vacuolar portion of the chain corresponds to 408–409 (GD). Residues 410–426 (FGHGILMTLFAVWMVLR) traverse the membrane as a helical segment. Over 427-441 (ESRILSQKNENEMFS) the chain is Cytoplasmic. The chain crosses the membrane as a helical span at residues 442-471 (TVFSGRYIILLMGVFSMYTGLIYNDCFSKS). The Vacuolar segment spans residues 472–534 (LNIFGSSWSV…ATNKLTFLNS (63 aa)). The helical transmembrane segment at 535–554 (FKMKMSVILGIIHMLFGVSL) threads the bilayer. The Cytoplasmic segment spans residues 555-572 (SLFNHIYFKKPLNIYFGF). The helical transmembrane segment at 573-593 (IPEIIFMTSLFGYLVILIFYK) threads the bilayer. Residues 594–638 (WTAYDAHTSENAPSLLIHFINMFLFSYPESGYSMLYSGQKGIQCF) are Vacuolar-facing. A helical transmembrane segment spans residues 639 to 658 (LVVVALLCVPWMLLFKPLVL). At 659-724 (RRQYLRRKHL…ATMVHQAIHT (66 aa)) the chain is on the cytoplasmic side. A helical transmembrane segment spans residues 725-749 (IEYCLGCISNTASYLRLWALSLAHA). Over 750-770 (QLSEVLWTMVIHIGLSVKSLA) the chain is Vacuolar. A helical membrane pass occupies residues 771–809 (GGLVLFFFFTAFATLTVAILLIMEGLSAFLHALRLHWVE). The Cytoplasmic portion of the chain corresponds to 810–837 (FQNKFYSGTGFKFLPFSFEHIREGKFGE).

The protein belongs to the V-ATPase 116 kDa subunit family. As to quaternary structure, V-ATPase is a heteromultimeric enzyme made up of two complexes: the ATP-hydrolytic V1 complex and the proton translocation V0 complex. The V1 complex consists of three catalytic AB heterodimers that form a heterohexamer, three peripheral stalks each consisting of EG heterodimers, one central rotor including subunits D and F, and the regulatory subunits C and H. The proton translocation complex V0 consists of the proton transport subunit a, a ring of proteolipid subunits c9c'', rotary subunit d, subunits e and f, and the accessory subunits ATP6AP1/Ac45 and ATP6AP2/PRR. Interacts with SPAAR.

The protein resides in the cytoplasmic vesicle. The protein localises to the clathrin-coated vesicle membrane. It is found in the secretory vesicle. Its subcellular location is the synaptic vesicle membrane. It localises to the melanosome. Functionally, subunit of the V0 complex of vacuolar(H+)-ATPase (V-ATPase), a multisubunit enzyme composed of a peripheral complex (V1) that hydrolyzes ATP and a membrane integral complex (V0) that translocates protons. V-ATPase is responsible for the acidification of various organelles, such as lysosomes, endosomes, the trans-Golgi network, and secretory granules, including synaptic vesicles. In certain cell types, can be exported to the plasma membrane, where it is involved in the acidification of the extracellular environment. Required for assembly and activity of the vacuolar ATPase. Through its action on compartment acidification, plays an essential role in neuronal development in terms of integrity and connectivity of neurons. The protein is V-type proton ATPase 116 kDa subunit a 1 (ATP6V0A1) of Pongo abelii (Sumatran orangutan).